Reading from the N-terminus, the 341-residue chain is Putative UPF0607 protein ENSP00000383144 (341 aa).

Disordered regions lie at residues 70–131 (RLPK…NPRP) and 218–279 (LMVG…PPAK). Over residues 72 to 101 (PKTEVRAEEPKEATEVKDQVETQEQEDNKR) the composition is skewed to basic and acidic residues. Positions 108-127 (EAASTSRPLETQGNLTSSWY) are enriched in polar residues. Basic residues predominate over residues 243 to 252 (AGHRSHKRKL).

Belongs to the UPF0607 family.

The sequence is that of Putative UPF0607 protein ENSP00000383144 from Homo sapiens (Human).